Here is a 395-residue protein sequence, read N- to C-terminus: Beta-1,4-galactosyltransferase 3 (395 aa).

Residues 1-10 lie on the Cytoplasmic side of the membrane; that stretch reads MLRRLLERPC. Residues 11-31 form a helical; Signal-anchor for type II membrane protein membrane-spanning segment; the sequence is TLALLVGSQLAVMMYLSLGGF. At 32 to 395 the chain is on the lumenal side; the sequence is RSLSALFGRD…ANHTAPHGSH (364 aa). Asn57 carries N-linked (GlcNAc...) asparagine glycosylation. A disulfide bridge links Cys79 with Cys121. 132-136 contributes to the UDP-alpha-D-galactose binding site; the sequence is PHRAR. N-linked (GlcNAc...) asparagine glycosylation occurs at Asn168. UDP-alpha-D-galactose contacts are provided by residues 171-173, 198-199, Tyr228, and Trp260; these read FNR and VD. A disulfide bridge links Cys192 with Cys211. Asp199 is a binding site for Mn(2+). An N-acetyl-D-glucosamine-binding site is contributed by 262–265; that stretch reads GEDD. His293 provides a ligand contact to Mn(2+). 293-295 serves as a coordination point for UDP-alpha-D-galactose; the sequence is HRG. Arg305 contacts N-acetyl-D-glucosamine. 2 N-linked (GlcNAc...) asparagine glycosylation sites follow: Asn339 and Asn387. Residues 341 to 395 form a disordered region; sequence TADIGTDPRGPRAPSGPRYPPGSSQAFRQEMLQRRPPARPGPLPTANHTAPHGSH.

It belongs to the glycosyltransferase 7 family. It depends on Mn(2+) as a cofactor.

It localises to the golgi apparatus. It is found in the golgi stack membrane. It carries out the reaction an N-acetyl-beta-D-glucosaminyl derivative + UDP-alpha-D-galactose = a beta-D-galactosyl-(1-&gt;4)-N-acetyl-beta-D-glucosaminyl derivative + UDP + H(+). It catalyses the reaction N-acetyl-D-glucosamine + UDP-alpha-D-galactose = beta-D-galactosyl-(1-&gt;4)-N-acetyl-D-glucosamine + UDP + H(+). The enzyme catalyses a beta-D-GlcNAc-(1-&gt;3)-beta-D-Gal-(1-&gt;4)-beta-D-Glc-(1&lt;-&gt;1)-Cer(d18:1(4E)) + UDP-alpha-D-galactose = a neolactoside nLc4Cer(d18:1(4E)) + UDP + H(+). The catalysed reaction is a beta-D-glucosylceramide + UDP-alpha-D-galactose = a beta-D-galactosyl-(1-&gt;4)-beta-D-glucosyl-(1&lt;-&gt;1)-ceramide + UDP + H(+). It carries out the reaction a neolactoside IV(3)-beta-GlcNAc-nLc4Cer + UDP-alpha-D-galactose = a neolactoside nLc6Cer + UDP + H(+). It participates in protein modification; protein glycosylation. Responsible for the synthesis of complex-type N-linked oligosaccharides in many glycoproteins as well as the carbohydrate moieties of glycolipids. The chain is Beta-1,4-galactosyltransferase 3 from Rattus norvegicus (Rat).